Here is a 263-residue protein sequence, read N- to C-terminus: uncharacterized protein (263 aa).

NADP(+) is bound at residue 13 to 20; it reads TGSTSGIG. Ser-141 is a substrate binding site. Tyr-154 acts as the Proton acceptor in catalysis.

The protein belongs to the short-chain dehydrogenases/reductases (SDR) family.

This is an uncharacterized protein from Bacillus subtilis (strain 168).